Consider the following 314-residue polypeptide: Ribonuclease Z (314 aa).

The Zn(2+) site is built by H61, H63, D65, H66, H137, D207, and H263. The active-site Proton acceptor is D65.

It belongs to the RNase Z family. In terms of assembly, homodimer. Zn(2+) is required as a cofactor.

It carries out the reaction Endonucleolytic cleavage of RNA, removing extra 3' nucleotides from tRNA precursor, generating 3' termini of tRNAs. A 3'-hydroxy group is left at the tRNA terminus and a 5'-phosphoryl group is left at the trailer molecule.. In terms of biological role, zinc phosphodiesterase, which displays some tRNA 3'-processing endonuclease activity. Probably involved in tRNA maturation, by removing a 3'-trailer from precursor tRNA. The chain is Ribonuclease Z from Thermococcus kodakarensis (strain ATCC BAA-918 / JCM 12380 / KOD1) (Pyrococcus kodakaraensis (strain KOD1)).